We begin with the raw amino-acid sequence, 243 residues long: Thaumatin-like protein 1 (243 aa).

The signal sequence occupies residues 1–22 (MMKTLALYGLTLALFFLSGAHS). 8 disulfides stabilise this stretch: Cys31-Cys242, Cys79-Cys88, Cys93-Cys100, Cys148-Cys231, Cys153-Cys214, Cys161-Cys177, Cys181-Cys190, and Cys191-Cys201.

This sequence belongs to the thaumatin family.

The protein localises to the secreted. It localises to the extracellular space. Its subcellular location is the apoplast. In terms of biological role, possesses antifungal activity. In Castanea sativa (Sweet chestnut), this protein is Thaumatin-like protein 1 (TL1).